We begin with the raw amino-acid sequence, 260 residues long: Putative ABC transporter ATP-binding protein PF0068 (260 aa).

Residues 2 to 234 form the ABC transporter domain; that stretch reads IEVKGVWFWY…DLKRYKLEEP (233 aa). 34–41 contributes to the ATP binding site; sequence GPNGSGKT.

This sequence belongs to the ABC transporter superfamily.

The protein resides in the cell membrane. In terms of biological role, probably part of an ABC transporter complex. Responsible for energy coupling to the transport system. This is Putative ABC transporter ATP-binding protein PF0068 from Pyrococcus furiosus (strain ATCC 43587 / DSM 3638 / JCM 8422 / Vc1).